A 346-amino-acid chain; its full sequence is dTDP-glucose 4,6-dehydratase (346 aa).

Residues Phe17–Ile18, Asp38–Thr41, Asp64–Ile65, Leu86–Ser90, and Thr105 each bind NAD(+). Ser90 provides a ligand contact to substrate. Thr139 contributes to the substrate binding site. Asp140 acts as the Proton donor in catalysis. Catalysis depends on proton acceptor residues Glu141 and Tyr165. Tyr165–Lys169 contributes to the NAD(+) binding site. Asn194 is a substrate binding site. Asn195 is a binding site for NAD(+). Substrate contacts are provided by residues Lys204–Leu205, Pro220–Tyr222, Arg229, Asn264, and Asp298–His302.

The protein belongs to the NAD(P)-dependent epimerase/dehydratase family. dTDP-glucose dehydratase subfamily. Homodimer. It depends on NAD(+) as a cofactor.

It catalyses the reaction dTDP-alpha-D-glucose = dTDP-4-dehydro-6-deoxy-alpha-D-glucose + H2O. Its pathway is carbohydrate biosynthesis; dTDP-L-rhamnose biosynthesis. It participates in bacterial outer membrane biogenesis; LPS O-antigen biosynthesis. Its function is as follows. Catalyzes the dehydration of dTDP-D-glucose to form dTDP-6-deoxy-D-xylo-4-hexulose via a three-step process involving oxidation, dehydration and reduction. The sequence is that of dTDP-glucose 4,6-dehydratase from Neisseria gonorrhoeae.